The sequence spans 453 residues: Methylenetetrahydrofolate--tRNA-(uracil-5-)-methyltransferase TrmFO (453 aa).

10-15 (GGGLAG) is an FAD binding site. The disordered stretch occupies residues 433–453 (ELAPWIDSAPPTAVPAAPAAG). A compositionally biased stretch (low complexity) spans 441–453 (APPTAVPAAPAAG).

Belongs to the MnmG family. TrmFO subfamily. It depends on FAD as a cofactor.

Its subcellular location is the cytoplasm. It carries out the reaction uridine(54) in tRNA + (6R)-5,10-methylene-5,6,7,8-tetrahydrofolate + NADH + H(+) = 5-methyluridine(54) in tRNA + (6S)-5,6,7,8-tetrahydrofolate + NAD(+). The catalysed reaction is uridine(54) in tRNA + (6R)-5,10-methylene-5,6,7,8-tetrahydrofolate + NADPH + H(+) = 5-methyluridine(54) in tRNA + (6S)-5,6,7,8-tetrahydrofolate + NADP(+). In terms of biological role, catalyzes the folate-dependent formation of 5-methyl-uridine at position 54 (M-5-U54) in all tRNAs. The protein is Methylenetetrahydrofolate--tRNA-(uracil-5-)-methyltransferase TrmFO of Anaeromyxobacter dehalogenans (strain 2CP-1 / ATCC BAA-258).